The sequence spans 333 residues: Complement C1q and tumor necrosis factor-related protein 9A (333 aa).

A signal peptide spans 1 to 19; it reads MRIWWLLLAIEICTGNINS. 3 consecutive Collagen-like domains span residues 24–82, 95–154, and 155–191; these read RQGH…DGKV, GSPG…PGPM, and GPIGKPGPKGEAGPTGPQGEPGVRGIRGWKGDRGEKG. Residues 24–188 are disordered; the sequence is RQGHPGIPGN…GIRGWKGDRG (165 aa). Over residues 26-40 the composition is skewed to low complexity; sequence GHPGIPGNPGHNGLP. 3 positions are modified to 4-hydroxyproline: P31, P34, and P40. Positions 42–57 are enriched in basic and acidic residues; the sequence is RDGRDGAKGDKGDAGE. A 4-hydroxyproline mark is found at P58, P61, and P64. The span at 69–88 shows a compositional bias: basic and acidic residues; that stretch reads TSGEKGERGADGKVEAKGIK. K73 and K127 each carry 5-hydroxylysine. 2 O-linked (Gal...) hydroxylysine glycosylation sites follow: K73 and K127. Residues P151, P160, and P175 each carry the 4-hydroxyproline modification. Residues 197-333 form the C1q domain; the sequence is LVLPKSAFTV…FTGFLLFSSP (137 aa).

Multimers (predominantly trimers). Interacts with ADIPOQ via the C1q domain to form a heterotrimeric complex. Interacts with CTRP9B. Forms heterotrimers and heterooligomeric complexes with CTRP9B. Expressed predominantly in adipose tissue.

It is found in the secreted. In terms of biological role, probable adipokine. Activates AMPK, AKT, and p44/42 MAPK signaling pathways. The chain is Complement C1q and tumor necrosis factor-related protein 9A (C1QTNF9) from Homo sapiens (Human).